A 349-amino-acid polypeptide reads, in one-letter code: Twinfilin-2-A (349 aa).

ADF-H domains lie at 4–139 and 177–313; these read QTGI…KHVS and GLSF…DEVH. The interval 321–349 is disordered; the sequence is QAFAKPKGPAGKRGQKRLIKGPGENGEDS.

It belongs to the actin-binding proteins ADF family. Twinfilin subfamily. Interacts with G-actin; ADP-actin form and capping protein (CP).

The protein localises to the cytoplasm. It localises to the cytoskeleton. The protein resides in the perinuclear region. In terms of biological role, actin-binding protein involved in motile and morphological processes. Inhibits actin polymerization, likely by sequestering G-actin. This is Twinfilin-2-A (twf2-a) from Xenopus laevis (African clawed frog).